A 495-amino-acid polypeptide reads, in one-letter code: Omega-crystallin (495 aa).

Belongs to the aldehyde dehydrogenase family. As to expression, lens.

Its function is as follows. Omega-crystallins are structural components of squids and octopi eye lens. Contains relatively little if any DHAL activity. This chain is Omega-crystallin, found in Nototodarus sloanii (Wellington flying squid).